The chain runs to 527 residues: Chorismate synthase (527 aa).

Catalysis depends on residues His-17, His-104, and Asp-485.

Belongs to the chorismate synthase family.

The protein resides in the cytoplasm. It is found in the cytosol. It carries out the reaction 5-O-(1-carboxyvinyl)-3-phosphoshikimate = chorismate + phosphate. It catalyses the reaction FMNH2 + NADP(+) = FMN + NADPH + 2 H(+). Its pathway is metabolic intermediate biosynthesis; chorismate biosynthesis; chorismate from D-erythrose 4-phosphate and phosphoenolpyruvate: step 7/7. Its function is as follows. Bifunctional chorismate synthase and flavin reductase. Catalyzes the conversion of 5-enolpyruvylshikimate 3-phosphate (EPSP) to form chorismate. Acts also as a flavin reductase (FR) able to generate reduced flavin mononucleotide in the presence of NADPH. This chain is Chorismate synthase, found in Plasmodium falciparum (isolate 3D7).